A 113-amino-acid polypeptide reads, in one-letter code: MHELSLCQSAVEIIQRQAEQHDVKRVTAVWLEIGALSCVEESAVRFSFEIVCHGTVAQGCDLHIVYKPAQAWCWDCSQVVEIHQHDAQCPLCHGERLRVDTGDSLIVKSIEVE.

Positions 2 and 3 each coordinate Ni(2+). 4 residues coordinate Zn(2+): Cys-73, Cys-76, Cys-89, and Cys-92.

It belongs to the HypA/HybF family. HybF subfamily. As to quaternary structure, monomer.

Functionally, involved in the maturation of [NiFe] hydrogenases. Required for nickel insertion into the metal center of the hydrogenase. HybF is involved in maturation of hydrogenases 1 and 2. It may partially substitute for the function of HypA and vice versa. The polypeptide is Hydrogenase maturation factor HybF (Escherichia coli (strain K12)).